A 92-amino-acid polypeptide reads, in one-letter code: uncharacterized protein (92 aa).

This is an uncharacterized protein from Archaeoglobus fulgidus (strain ATCC 49558 / DSM 4304 / JCM 9628 / NBRC 100126 / VC-16).